Consider the following 152-residue polypeptide: D-aminoacyl-tRNA deacylase (152 aa).

Positions 137–138 match the Gly-cisPro motif, important for rejection of L-amino acids motif; that stretch reads GP.

Belongs to the DTD family. As to quaternary structure, homodimer.

It is found in the cytoplasm. The enzyme catalyses glycyl-tRNA(Ala) + H2O = tRNA(Ala) + glycine + H(+). It catalyses the reaction a D-aminoacyl-tRNA + H2O = a tRNA + a D-alpha-amino acid + H(+). Its function is as follows. An aminoacyl-tRNA editing enzyme that deacylates mischarged D-aminoacyl-tRNAs. Also deacylates mischarged glycyl-tRNA(Ala), protecting cells against glycine mischarging by AlaRS. Acts via tRNA-based rather than protein-based catalysis; rejects L-amino acids rather than detecting D-amino acids in the active site. By recycling D-aminoacyl-tRNA to D-amino acids and free tRNA molecules, this enzyme counteracts the toxicity associated with the formation of D-aminoacyl-tRNA entities in vivo and helps enforce protein L-homochirality. The polypeptide is D-aminoacyl-tRNA deacylase (Geobacillus sp. (strain WCH70)).